The chain runs to 75 residues: Rugosin-LK2 (75 aa).

A signal peptide spans 1–24 (MFTMKKSLLFLFFLGTISLSFCEG). The propeptide occupies 25–40 (ERSADEDDEGEMTEEE).

In terms of tissue distribution, expressed by the skin glands.

Its subcellular location is the secreted. Has antimicrobial activity against Gram-positive bacteria S.aureus ATCC 2592 (MIC=10.0 uM), S.aureus ATCC 43300 (MIC=10.0 uM) and B.subtilis (MIC=30.0 uM), against Gram-negative bacteria E.coli ML-35P (MIC=10.0 uM), P.aeruginosa PA01 (MIC=2.5 uM) and P.aeruginosa ATCC 27853 (MIC=2.5 uM) and against fungus C.albicans ATCC 2002 (MIC=10.0 uM). In Limnonectes kuhlii (Kuhl's Creek frog), this protein is Rugosin-LK2.